The sequence spans 284 residues: UDP-N-acetylenolpyruvoylglucosamine reductase (284 aa).

One can recognise an FAD-binding PCMH-type domain in the interval lysine 21 to alanine 180. The active site involves arginine 159. Residue serine 209 is the Proton donor of the active site. The active site involves glutamate 280.

Belongs to the MurB family. The cofactor is FAD.

The protein localises to the cytoplasm. The catalysed reaction is UDP-N-acetyl-alpha-D-muramate + NADP(+) = UDP-N-acetyl-3-O-(1-carboxyvinyl)-alpha-D-glucosamine + NADPH + H(+). The protein operates within cell wall biogenesis; peptidoglycan biosynthesis. Cell wall formation. This is UDP-N-acetylenolpyruvoylglucosamine reductase from Pseudothermotoga lettingae (strain ATCC BAA-301 / DSM 14385 / NBRC 107922 / TMO) (Thermotoga lettingae).